A 669-amino-acid chain; its full sequence is MDTASSPPNAERKRAGWGRLLGARRGSAGLAKKCPFSLELAEGGPTGGTVYAPIAPTGAPGLAPPMSPPVSPVPAPADLGPRPRVSLDPRVSIYSTRRPLLARTHIQGRVYNFLERPTGWKCFVYHFTVFLIVLVCLIFSVLSTIEQYAALATGTLFWMEIVLVVFFGTEYVVRLWSAGCRSKYVGIWGRLRFARKPISIIDLIVVVASMVVLCVGSKGQVFATSAIRGIRFLQILRMLHVDRQGGTWRLLGSVVFIHRQELITTLYIGFLGLIFSSYFVYLAEKDAVNESGRIEFGSYADALWWGVVTVTTIGYGDKVPQTWVGKTIASCFSVFAISFFALPAGILGSGFALKVQQKQRQKHFNRQIPAAASLIQTAWRCYAAENPDSSTWKIYVRKPARSHTLLSPSPKPKKSVMVKKKKFKLDKDNGLSPGEKIFNVPHITCDPPEDRRPDHFSIDGYDSSVRKSPTLLEVSTPHFLRTNSFAEDLDLEGETLLTPITHVSQLRDHHRATIKVIRRMQYFVAKKKFQQARKPYDVRDVIEQYSQGHLNLMVRIKELQRRLDQSIGKPSLFIPISEKSKDRGSNTIGARLNRVEDKVTQLDQRLVIITDMLHQLLSLQQGGPTCNNRSQVVASDERGSINPELFLPSNSLPTYEQLTVPQTGPDEGS.

Residues 1-120 (MDTASSPPNA…YNFLERPTGW (120 aa)) are Cytoplasmic-facing. Phosphoserine; by PKA is present on serine 27. Residues 121–142 (KCFVYHFTVFLIVLVCLIFSVL) form a helical membrane-spanning segment. At 143–153 (STIEQYAALAT) the chain is on the extracellular side. Residues 154–176 (GTLFWMEIVLVVFFGTEYVVRLW) traverse the membrane as a helical segment. Over 177–192 (SAGCRSKYVGIWGRLR) the chain is Cytoplasmic. A helical transmembrane segment spans residues 193–218 (FARKPISIIDLIVVVASMVVLCVGSK). The Extracellular portion of the chain corresponds to 219–226 (GQVFATSA). The helical; Voltage-sensor transmembrane segment at 227–242 (IRGIRFLQILRMLHVD) threads the bilayer. The segment at 238 to 246 (MLHVDRQGG) is interaction with KCNE3. Residues 243 to 260 (RQGGTWRLLGSVVFIHRQ) are Cytoplasmic-facing. Glutamine 244 lines the a 1,2-diacyl-sn-glycero-3-phospho-(1D-myo-inositol-4,5-bisphosphate) pocket. Residues 261–283 (ELITTLYIGFLGLIFSSYFVYLA) form a helical membrane-spanning segment. The Extracellular segment spans residues 284–299 (EKDAVNESGRIEFGSY). Residue asparagine 289 is glycosylated (N-linked (GlcNAc...) asparagine). An intramembrane region (pore-forming) is located at residues 300 to 320 (ADALWWGVVTVTTIGYGDKVP). The Extracellular portion of the chain corresponds to 321-322 (QT). A helical transmembrane segment spans residues 323 to 348 (WVGKTIASCFSVFAISFFALPAGILG). At 349 to 669 (SGFALKVQQK…VPQTGPDEGS (321 aa)) the chain is on the cytoplasmic side. An interaction with CALM region spans residues 370–382 (AAASLIQTAWRCY). Phosphoserine is present on residues serine 407 and serine 409. The tract at residues 515–529 (KVIRRMQYFVAKKKF) is interaction with CALM; calcium-dependent. The interval 535–572 (PYDVRDVIEQYSQGHLNLMVRIKELQRRLDQSIGKPSL) is interaction with KCNE1 C-terminus. Residues 585–621 (SNTIGARLNRVEDKVTQLDQRLVIITDMLHQLLSLQQ) are a coiled coil. Positions 588–616 (IGARLNRVEDKVTQLDQRLVIITDMLHQL) are interaction with AKAP9. The tract at residues 589–620 (GARLNRVEDKVTQLDQRLVIITDMLHQLLSLQ) is C-terminal assembly domain (tetramerization).

It belongs to the potassium channel family. KQT (TC 1.A.1.15) subfamily. Kv7.1/KCNQ1 sub-subfamily. As to quaternary structure, tetramer. Heterotetramer with KCNE1; targets to the membrane raft. Interacts (via C-terminus) with CALM; forms a heterooctameric structure (with 4:4 KCNQ1:CALM stoichiometry) in a calcium-independent manner. Interacts with AKAP9; targets protein kinase A (PKA) catalytic and regulatory subunits and protein phosphatase 1 (PP1) to the KCNQ1-KCNE1 complex, allowing PKA-mediated phosphorylation and increase of delayed rectifier potassium channel activity. Interacts with KCNE2; form a heterooligomer complex that targets to the membrane raft and leading to currents with an apparently instantaneous activation, a rapid deactivation process and a linear current-voltage relationship and decreases the amplitude of the outward current. Interacts with AP2M1; mediates estrogen-induced internalization via clathrin-coated vesicles. Interacts with NEDD4L; promotes internalization and decreases I(Ks) currents. Interacts with USP2; counteracts the NEDD4L-specific down-regulation of I(Ks) and restore plasma membrane localization. Heterotetramer with KCNQ5; has a voltage-gated potassium channel activity. Interacts with KCNE3; produces a current with nearly instantaneous activation with a linear current-voltage relationship and alters membrane raft localization. Interacts with KCNE4; impairs KCNQ1 localization in lipid rafts and inhibits voltage-gated potassium channel activity. Interacts with KCNE5; impairs KCNQ1 localization in lipid rafts and only conducts current upon strong and continued depolarization. Interacts with SLC5A3; forms coregulatory channel-transporter complexes that modulate Na(+)-coupled myo-inositol influx through the transporter. Post-translationally, phosphorylation at Ser-27 by PKA; increases delayed rectifier potassium channel activity of the KCNQ1-KCNE1 complex through a macromolecular complex that includes PKA, PP1, and the targeting protein AKAP9. Ubiquitinated by NEDD4L; promotes internalization. The ubiquitinylated form is internalized through a clathrin-mediated endocytosis by interacting with AP2M1 and is recycled back to the cell membrane via RAB4A and RAB11A. In terms of processing, deubiquitinated by USP2; counteracts the NEDD4L-specific down-regulation of I(Ks) and restores the membrane localization.

The protein resides in the cell membrane. It is found in the cytoplasmic vesicle membrane. Its subcellular location is the early endosome. It localises to the membrane raft. The protein localises to the endoplasmic reticulum. The protein resides in the basolateral cell membrane. It is found in the apical cell membrane. The enzyme catalyses K(+)(in) = K(+)(out). Its activity is regulated as follows. PIP2 molecule is essential to activate KCNQ channels by inducing the coupling of the voltage-sensing domain (VSD) and the pore-forming domain (PD). Upon channel activation, PIP2 disrupts the VSD-calmodulin/CALM interactions, causing the release of CALM from the VSD which triggers the opening of the gate. Calcium potentiates KCNQ1 channel current through calcium-bound CALM. Calcium-bound CALM competes with PIP2 to stabilize the channel open state. Functionally, pore-forming subunit of the voltage-gated potassium (Kv) channel involved in the regulation of cardiomyocyte excitability and important in normal development and functions of myocardium, inner ear, stomach and colon. Associates with KCNE beta subunits that modulates current kinetics. Induces a voltage-dependent by rapidly activating and slowly deactivating potassium-selective outward current. Also promotes a delayed voltage activated potassium current showing outward rectification characteristic. During beta-adrenergic receptor stimulation participates in cardiac repolarization by associating with KCNE1 to form the I(Ks) cardiac potassium current that increases the amplitude and slows down the activation kinetics of outward potassium current I(Ks). Muscarinic agonist oxotremorine-M strongly suppresses KCNQ1/KCNE1 current. When associated with KCNE3, forms the potassium channel that is important for cyclic AMP-stimulated intestinal secretion of chloride ions. This interaction with KCNE3 is reduced by 17beta-estradiol, resulting in the reduction of currents. During conditions of increased substrate load, maintains the driving force for proximal tubular and intestinal sodium ions absorption, gastric acid secretion, and cAMP-induced jejunal chloride ions secretion. Allows the provision of potassium ions to the luminal membrane of the secretory canaliculus in the resting state as well as during stimulated acid secretion. When associated with KCNE2, forms a heterooligomer complex leading to currents with an apparently instantaneous activation, a rapid deactivation process and a linear current-voltage relationship and decreases the amplitude of the outward current. When associated with KCNE4, inhibits voltage-gated potassium channel activity. When associated with KCNE5, this complex only conducts current upon strong and continued depolarization. Also forms a heterotetramer with KCNQ5 that has a voltage-gated potassium channel activity. Binds with phosphatidylinositol 4,5-bisphosphate. KCNQ1-KCNE2 channel associates with Na(+)-coupled myo-inositol symporter in the apical membrane of choroid plexus epithelium and regulates the myo-inositol gradient between blood and cerebrospinal fluid with an impact on neuron excitability. This Rattus norvegicus (Rat) protein is Potassium voltage-gated channel subfamily KQT member 1.